We begin with the raw amino-acid sequence, 269 residues long: Phosphonates import ATP-binding protein PhnC 2 (269 aa).

The ABC transporter domain maps to 2 to 246 (LRIDSLSKRY…VLNEIYGEED (245 aa)). 35 to 42 (GPSGAGKS) serves as a coordination point for ATP. Positions 246 to 269 (DWNASGPAQDSEENEAVSAGVATH) are disordered.

The protein belongs to the ABC transporter superfamily. Phosphonates importer (TC 3.A.1.9.1) family. In terms of assembly, the complex is composed of two ATP-binding proteins (PhnC), two transmembrane proteins (PhnE) and a solute-binding protein (PhnD).

It localises to the cell inner membrane. It catalyses the reaction phosphonate(out) + ATP + H2O = phosphonate(in) + ADP + phosphate + H(+). Part of the ABC transporter complex PhnCDE involved in phosphonates import. Responsible for energy coupling to the transport system. This is Phosphonates import ATP-binding protein PhnC 2 from Synechococcus sp. (strain JA-2-3B'a(2-13)) (Cyanobacteria bacterium Yellowstone B-Prime).